Reading from the N-terminus, the 250-residue chain is Leucyl/phenylalanyl-tRNA--protein transferase (250 aa).

This sequence belongs to the L/F-transferase family.

The protein resides in the cytoplasm. The catalysed reaction is N-terminal L-lysyl-[protein] + L-leucyl-tRNA(Leu) = N-terminal L-leucyl-L-lysyl-[protein] + tRNA(Leu) + H(+). It carries out the reaction N-terminal L-arginyl-[protein] + L-leucyl-tRNA(Leu) = N-terminal L-leucyl-L-arginyl-[protein] + tRNA(Leu) + H(+). The enzyme catalyses L-phenylalanyl-tRNA(Phe) + an N-terminal L-alpha-aminoacyl-[protein] = an N-terminal L-phenylalanyl-L-alpha-aminoacyl-[protein] + tRNA(Phe). In terms of biological role, functions in the N-end rule pathway of protein degradation where it conjugates Leu, Phe and, less efficiently, Met from aminoacyl-tRNAs to the N-termini of proteins containing an N-terminal arginine or lysine. The protein is Leucyl/phenylalanyl-tRNA--protein transferase of Cupriavidus pinatubonensis (strain JMP 134 / LMG 1197) (Cupriavidus necator (strain JMP 134)).